The sequence spans 241 residues: Small ribosomal subunit protein uS3 (241 aa).

Residues 39 to 107 (IRKYLEKELK…ETHLNIVEVR (69 aa)) enclose the KH type-2 domain. The segment at 214–241 (ASERRATEGDAAHGGGGDRERGRRRENA) is disordered.

This sequence belongs to the universal ribosomal protein uS3 family. In terms of assembly, part of the 30S ribosomal subunit. Forms a tight complex with proteins S10 and S14.

Its function is as follows. Binds the lower part of the 30S subunit head. Binds mRNA in the 70S ribosome, positioning it for translation. The polypeptide is Small ribosomal subunit protein uS3 (Mesorhizobium japonicum (strain LMG 29417 / CECT 9101 / MAFF 303099) (Mesorhizobium loti (strain MAFF 303099))).